We begin with the raw amino-acid sequence, 299 residues long: Phosphatidylserine decarboxylase proenzyme (299 aa).

Catalysis depends on charge relay system; for autoendoproteolytic cleavage activity residues aspartate 90, histidine 147, and serine 254. The active-site Schiff-base intermediate with substrate; via pyruvic acid; for decarboxylase activity is serine 254. Position 254 is a pyruvic acid (Ser); by autocatalysis (serine 254).

This sequence belongs to the phosphatidylserine decarboxylase family. PSD-B subfamily. Prokaryotic type I sub-subfamily. Heterodimer of a large membrane-associated beta subunit and a small pyruvoyl-containing alpha subunit. Pyruvate serves as cofactor. Is synthesized initially as an inactive proenzyme. Formation of the active enzyme involves a self-maturation process in which the active site pyruvoyl group is generated from an internal serine residue via an autocatalytic post-translational modification. Two non-identical subunits are generated from the proenzyme in this reaction, and the pyruvate is formed at the N-terminus of the alpha chain, which is derived from the carboxyl end of the proenzyme. The autoendoproteolytic cleavage occurs by a canonical serine protease mechanism, in which the side chain hydroxyl group of the serine supplies its oxygen atom to form the C-terminus of the beta chain, while the remainder of the serine residue undergoes an oxidative deamination to produce ammonia and the pyruvoyl prosthetic group on the alpha chain. During this reaction, the Ser that is part of the protease active site of the proenzyme becomes the pyruvoyl prosthetic group, which constitutes an essential element of the active site of the mature decarboxylase.

The protein resides in the cell membrane. The catalysed reaction is a 1,2-diacyl-sn-glycero-3-phospho-L-serine + H(+) = a 1,2-diacyl-sn-glycero-3-phosphoethanolamine + CO2. Its pathway is phospholipid metabolism; phosphatidylethanolamine biosynthesis; phosphatidylethanolamine from CDP-diacylglycerol: step 2/2. Functionally, catalyzes the formation of phosphatidylethanolamine (PtdEtn) from phosphatidylserine (PtdSer). This Erwinia tasmaniensis (strain DSM 17950 / CFBP 7177 / CIP 109463 / NCPPB 4357 / Et1/99) protein is Phosphatidylserine decarboxylase proenzyme.